Here is a 90-residue protein sequence, read N- to C-terminus: Sakacin-A immunity factor (90 aa).

Its function is as follows. Imparts immunity to sakacin-A to naturally sensitive host strains. The polypeptide is Sakacin-A immunity factor (saiA) (Latilactobacillus sakei (Lactobacillus sakei)).